Consider the following 225-residue polypeptide: Ribose-5-phosphate isomerase A (225 aa).

Substrate contacts are provided by residues 32 to 35 (TGST), 85 to 88 (DGAD), and 98 to 101 (KGGG). The Proton acceptor role is filled by Glu107. Position 125 (Lys125) interacts with substrate.

Belongs to the ribose 5-phosphate isomerase family. As to quaternary structure, homodimer.

It catalyses the reaction aldehydo-D-ribose 5-phosphate = D-ribulose 5-phosphate. The protein operates within carbohydrate degradation; pentose phosphate pathway; D-ribose 5-phosphate from D-ribulose 5-phosphate (non-oxidative stage): step 1/1. Functionally, catalyzes the reversible conversion of ribose-5-phosphate to ribulose 5-phosphate. This Marinobacter nauticus (strain ATCC 700491 / DSM 11845 / VT8) (Marinobacter aquaeolei) protein is Ribose-5-phosphate isomerase A.